A 412-amino-acid chain; its full sequence is Transcription factor IIIA (412 aa).

The disordered stretch occupies residues 1 to 20; that stretch reads MSESDETKSISSLISSSSSS. Residues 9–20 show a composition bias toward low complexity; the sequence is SISSLISSSSSS. C2H2-type zinc fingers lie at residues 25 to 49, 55 to 79, 85 to 107, 111 to 136, 140 to 162, 169 to 194, and 197 to 219; these read YICT…LRTH, YKCT…IVSH, FHCS…EITH, FKCT…LSVH, LTCK…KLKH, YQCD…KQSH, and LKCP…MLSH. The C2H2-type 8; degenerate zinc finger occupies 228 to 252; it reads WTCDYCDVGKFAKKNELVEHYNIFH. Residues 285-316 are disordered; sequence LETEKLKVEEDEEDEEDSLDEKRSDVRSDSMS. Positions 293 to 303 are enriched in acidic residues; the sequence is EEDEEDEEDSL. The C2H2-type 9 zinc finger occupies 345–369; the sequence is INCPKNNCDRMFSREYDLRRHLKWH.

It localises to the nucleus. Its function is as follows. Transcription factor required for transcription of 5S rRNA by RNA polymerase III. The polypeptide is Transcription factor IIIA (PZF1) (Candida albicans (strain SC5314 / ATCC MYA-2876) (Yeast)).